The primary structure comprises 227 residues: Urease accessory protein UreF 2 (227 aa).

It belongs to the UreF family. In terms of assembly, ureD, UreF and UreG form a complex that acts as a GTP-hydrolysis-dependent molecular chaperone, activating the urease apoprotein by helping to assemble the nickel containing metallocenter of UreC. The UreE protein probably delivers the nickel.

It is found in the cytoplasm. Its function is as follows. Required for maturation of urease via the functional incorporation of the urease nickel metallocenter. In Brucella anthropi (strain ATCC 49188 / DSM 6882 / CCUG 24695 / JCM 21032 / LMG 3331 / NBRC 15819 / NCTC 12168 / Alc 37) (Ochrobactrum anthropi), this protein is Urease accessory protein UreF 2.